The sequence spans 360 residues: Phospho-N-acetylmuramoyl-pentapeptide-transferase (360 aa).

10 helical membrane passes run 27 to 47, 69 to 89, 93 to 113, 134 to 154, 168 to 188, 199 to 219, 239 to 259, 262 to 282, 288 to 308, and 337 to 357; these read GAFLTALIFGFVFGKPLINVL, VGTPTMGGLLIVGALLFSTLM, WDNPFVWLVLFVTMSFGLIGF, LLLGFVIAIVAALWASWNHPA, VLLNLGYLYVPFCICVIVGAA, GLAIMPVMIAAGTLGIIAYAV, ILIFTSALFGGGLGFLWYNAP, AVFMGDTGSLALGGALGAIAI, LVLAIVGGLFVVEALSVIIQV, and TIVIRFWIISLILAMIGLATL.

It belongs to the glycosyltransferase 4 family. MraY subfamily. It depends on Mg(2+) as a cofactor.

The protein resides in the cell inner membrane. It catalyses the reaction UDP-N-acetyl-alpha-D-muramoyl-L-alanyl-gamma-D-glutamyl-meso-2,6-diaminopimeloyl-D-alanyl-D-alanine + di-trans,octa-cis-undecaprenyl phosphate = di-trans,octa-cis-undecaprenyl diphospho-N-acetyl-alpha-D-muramoyl-L-alanyl-D-glutamyl-meso-2,6-diaminopimeloyl-D-alanyl-D-alanine + UMP. The protein operates within cell wall biogenesis; peptidoglycan biosynthesis. Functionally, catalyzes the initial step of the lipid cycle reactions in the biosynthesis of the cell wall peptidoglycan: transfers peptidoglycan precursor phospho-MurNAc-pentapeptide from UDP-MurNAc-pentapeptide onto the lipid carrier undecaprenyl phosphate, yielding undecaprenyl-pyrophosphoryl-MurNAc-pentapeptide, known as lipid I. This chain is Phospho-N-acetylmuramoyl-pentapeptide-transferase, found in Ruegeria sp. (strain TM1040) (Silicibacter sp.).